The chain runs to 359 residues: Phosphate acyltransferase (359 aa).

The disordered stretch occupies residues 335–359; sequence SGAGGAATGSPETDAPNPHPDSRAA.

Belongs to the PlsX family. Homodimer. Probably interacts with PlsY.

It is found in the cytoplasm. The enzyme catalyses a fatty acyl-[ACP] + phosphate = an acyl phosphate + holo-[ACP]. It participates in lipid metabolism; phospholipid metabolism. In terms of biological role, catalyzes the reversible formation of acyl-phosphate (acyl-PO(4)) from acyl-[acyl-carrier-protein] (acyl-ACP). This enzyme utilizes acyl-ACP as fatty acyl donor, but not acyl-CoA. The chain is Phosphate acyltransferase from Cupriavidus metallidurans (strain ATCC 43123 / DSM 2839 / NBRC 102507 / CH34) (Ralstonia metallidurans).